The chain runs to 788 residues: Protein FAR1-RELATED SEQUENCE 5 (788 aa).

Positions 87–179 (AFYNSYARRI…VKDHNHELVP (93 aa)) constitute an FAR1 domain. The MULE domain occupies 299–395 (TVTFDTTYRS…CKWHILKKCQ (97 aa)). Residues 584-616 (FNVLEMRANCSCQMFEFSGIICRHILAVFRVTN) form an SWIM-type zinc finger. The disordered stretch occupies residues 713 to 733 (SSVTGGKHQQEVLAQPEPEDE). The stretch at 731–768 (EDEMDKKINQLRNELELANRKCEAYRTNLLSVLKEMED) forms a coiled coil.

The protein belongs to the FHY3/FAR1 family. In terms of tissue distribution, expressed in hypocotyls, rosette and cauline leaves, inflorescences stems, flowers and siliques.

The protein localises to the nucleus. In terms of biological role, putative transcription activator involved in regulating light control of development. The chain is Protein FAR1-RELATED SEQUENCE 5 (FRS5) from Arabidopsis thaliana (Mouse-ear cress).